A 287-amino-acid chain; its full sequence is tRNA pseudouridine synthase B (287 aa).

Aspartate 38 acts as the Nucleophile in catalysis.

Belongs to the pseudouridine synthase TruB family. Type 1 subfamily.

The catalysed reaction is uridine(55) in tRNA = pseudouridine(55) in tRNA. Responsible for synthesis of pseudouridine from uracil-55 in the psi GC loop of transfer RNAs. In Aquifex aeolicus (strain VF5), this protein is tRNA pseudouridine synthase B.